The chain runs to 423 residues: Hypoxia responsive morphology factor B (423 aa).

Residues 46-69 (KRSKTRRPKKEYKLQYENTKAHRV) carry the Bipartite nuclear localization signal motif. The tract at residues 157–187 (TQNCWAYRAAYLNAVHTIFSEQICSAMEVSP) is RNA recognition motif (RRM)-like domain. A compositionally biased stretch (polar residues) spans 243–257 (LSPQSGRGPEPSTQI). Positions 243–273 (LSPQSGRGPEPSTQIAEPGRHDSQSEQSTIS) are disordered.

This sequence belongs to the hrmA family.

The protein resides in the nucleus. Its function is as follows. Probably modulates the generation of the hypoxia-typic morphotype (called H-MORPH) with altered biofilm architecture that leads to increased host inflammation, rapid disease progression, and mortality in a murine model of invasive aspergillosis. This Aspergillus fumigatus (strain CBS 144.89 / FGSC A1163 / CEA10) (Neosartorya fumigata) protein is Hypoxia responsive morphology factor B.